Consider the following 237-residue polypeptide: Ribose-5-phosphate isomerase A (237 aa).

Residues 33–36 (TGST), 88–91 (DGAD), and 101–104 (KGRG) each bind substrate. The active-site Proton acceptor is Glu110. Lys128 is a binding site for substrate.

Belongs to the ribose 5-phosphate isomerase family. Homodimer.

The enzyme catalyses aldehydo-D-ribose 5-phosphate = D-ribulose 5-phosphate. Its pathway is carbohydrate degradation; pentose phosphate pathway; D-ribose 5-phosphate from D-ribulose 5-phosphate (non-oxidative stage): step 1/1. Catalyzes the reversible conversion of ribose-5-phosphate to ribulose 5-phosphate. In Methanoregula boonei (strain DSM 21154 / JCM 14090 / 6A8), this protein is Ribose-5-phosphate isomerase A.